Here is a 125-residue protein sequence, read N- to C-terminus: Ribonuclease P protein component (125 aa).

Belongs to the RnpA family. Consists of a catalytic RNA component (M1 or rnpB) and a protein subunit.

The catalysed reaction is Endonucleolytic cleavage of RNA, removing 5'-extranucleotides from tRNA precursor.. Its function is as follows. RNaseP catalyzes the removal of the 5'-leader sequence from pre-tRNA to produce the mature 5'-terminus. It can also cleave other RNA substrates such as 4.5S RNA. The protein component plays an auxiliary but essential role in vivo by binding to the 5'-leader sequence and broadening the substrate specificity of the ribozyme. This Idiomarina loihiensis (strain ATCC BAA-735 / DSM 15497 / L2-TR) protein is Ribonuclease P protein component.